A 122-amino-acid polypeptide reads, in one-letter code: Large ribosomal subunit protein uL24 (122 aa).

The protein belongs to the universal ribosomal protein uL24 family. In terms of assembly, part of the 50S ribosomal subunit.

One of two assembly initiator proteins, it binds directly to the 5'-end of the 23S rRNA, where it nucleates assembly of the 50S subunit. Functionally, one of the proteins that surrounds the polypeptide exit tunnel on the outside of the subunit. This Renibacterium salmoninarum (strain ATCC 33209 / DSM 20767 / JCM 11484 / NBRC 15589 / NCIMB 2235) protein is Large ribosomal subunit protein uL24.